The chain runs to 352 residues: Protein RecA (352 aa).

67–74 is an ATP binding site; the sequence is GPESSGKT.

This sequence belongs to the RecA family.

The protein localises to the cytoplasm. In terms of biological role, can catalyze the hydrolysis of ATP in the presence of single-stranded DNA, the ATP-dependent uptake of single-stranded DNA by duplex DNA, and the ATP-dependent hybridization of homologous single-stranded DNAs. It interacts with LexA causing its activation and leading to its autocatalytic cleavage. In Chlamydia trachomatis serovar D (strain ATCC VR-885 / DSM 19411 / UW-3/Cx), this protein is Protein RecA.